A 159-amino-acid chain; its full sequence is Large ribosomal subunit protein uL15 (159 aa).

Positions 1 to 13 (MRLNELRDNDGAT) are enriched in basic and acidic residues. A disordered region spans residues 1 to 41 (MRLNELRDNDGATKIRTRVGRGIGSGKGKTGGRGVKGQKSR). Positions 21-35 (RGIGSGKGKTGGRGV) are enriched in gly residues.

It belongs to the universal ribosomal protein uL15 family. Part of the 50S ribosomal subunit.

Binds to the 23S rRNA. This chain is Large ribosomal subunit protein uL15, found in Maricaulis maris (strain MCS10) (Caulobacter maris).